The chain runs to 350 residues: Biotin synthase (350 aa).

In terms of domain architecture, Radical SAM core spans 38–256; that stretch reads NHVQVSTLLS…IAVARIMMPE (219 aa). Residues cysteine 53, cysteine 57, and cysteine 60 each contribute to the [4Fe-4S] cluster site. The [2Fe-2S] cluster site is built by cysteine 97, cysteine 128, cysteine 188, and arginine 260.

This sequence belongs to the radical SAM superfamily. Biotin synthase family. Homodimer. The cofactor is [4Fe-4S] cluster. [2Fe-2S] cluster serves as cofactor.

It carries out the reaction (4R,5S)-dethiobiotin + (sulfur carrier)-SH + 2 reduced [2Fe-2S]-[ferredoxin] + 2 S-adenosyl-L-methionine = (sulfur carrier)-H + biotin + 2 5'-deoxyadenosine + 2 L-methionine + 2 oxidized [2Fe-2S]-[ferredoxin]. The protein operates within cofactor biosynthesis; biotin biosynthesis; biotin from 7,8-diaminononanoate: step 2/2. Its function is as follows. Catalyzes the conversion of dethiobiotin (DTB) to biotin by the insertion of a sulfur atom into dethiobiotin via a radical-based mechanism. This Aliivibrio fischeri (strain MJ11) (Vibrio fischeri) protein is Biotin synthase.